A 179-amino-acid chain; its full sequence is Probable RNA 2'-phosphotransferase (179 aa).

This sequence belongs to the KptA/TPT1 family.

Removes the 2'-phosphate from RNA via an intermediate in which the phosphate is ADP-ribosylated by NAD followed by a presumed transesterification to release the RNA and generate ADP-ribose 1''-2''-cyclic phosphate (APPR&gt;P). May function as an ADP-ribosylase. The sequence is that of Probable RNA 2'-phosphotransferase from Fusobacterium nucleatum subsp. nucleatum (strain ATCC 25586 / DSM 15643 / BCRC 10681 / CIP 101130 / JCM 8532 / KCTC 2640 / LMG 13131 / VPI 4355).